A 537-amino-acid chain; its full sequence is Chaperonin GroEL 2 (537 aa).

Residues 29–32, 86–90, glycine 413, 477–479, and aspartate 493 contribute to the ATP site; these read TLGP, DGTTT, and NAA.

This sequence belongs to the chaperonin (HSP60) family. Forms a cylinder of 14 subunits composed of two heptameric rings stacked back-to-back. Interacts with the co-chaperonin GroES.

The protein resides in the cytoplasm. It catalyses the reaction ATP + H2O + a folded polypeptide = ADP + phosphate + an unfolded polypeptide.. Its function is as follows. Together with its co-chaperonin GroES, plays an essential role in assisting protein folding. The GroEL-GroES system forms a nano-cage that allows encapsulation of the non-native substrate proteins and provides a physical environment optimized to promote and accelerate protein folding. This Rhodococcus jostii (strain RHA1) protein is Chaperonin GroEL 2.